The following is an 820-amino-acid chain: DNA replication helicase (820 aa).

Position 90-97 (90-97) interacts with ATP; sequence GTAGAGKT.

Belongs to the herpesviridae helicase family. As to quaternary structure, associates with the primase and the primase-associated factor to form the helicase-primase complex.

The protein localises to the host nucleus. Its function is as follows. Component of the helicase/primase complex. Unwinds the DNA at the replication forks and generates single-stranded DNA for both leading and lagging strand synthesis. The primase synthesizes short RNA primers on the lagging strand that the polymerase elongates using dNTPs. Possesses helicase-like motifs and therefore may act as the helicase subunit of the complex. This chain is DNA replication helicase, found in Human herpesvirus 7 (strain JI) (HHV-7).